Here is a 495-residue protein sequence, read N- to C-terminus: Lysine--tRNA ligase (495 aa).

Mg(2+)-binding residues include Glu-406 and Glu-413.

It belongs to the class-II aminoacyl-tRNA synthetase family. As to quaternary structure, homodimer. It depends on Mg(2+) as a cofactor.

The protein resides in the cytoplasm. The enzyme catalyses tRNA(Lys) + L-lysine + ATP = L-lysyl-tRNA(Lys) + AMP + diphosphate. The sequence is that of Lysine--tRNA ligase from Staphylococcus aureus (strain MRSA252).